Here is a 496-residue protein sequence, read N- to C-terminus: MERYILSLDQGTTSSRAILFNKNGEIVHIAQREFKQYFPKPGWVEHNANEIWGSILAVIATVLSEASVQPEQVAAIGITNQRETTVVWDKHTGLPIYNAIVWQSRQTADICEQLKQQGYDELFRKKTGLLIDPYFSGTKVKWILDNVEGAREKAEKGDLLFGTIDTWLIWKLSGGRAHVTDYSNASRTLLFNIHTLQWDDEILNILGIPKSMLPKVRPSSEVYAKTIPHHFFGVEVPIAGAAGDQQAALFGQACFEEGMAKNTYGTGCFMLMNTGEKAVQSKHGLLTTIAWGIDGKVEYALEGSIFVAGSAVQWLRDGLRMIKKASDSETYAEKVDSTDGVYVVPAFVGLGTPYWDSDVRGAVFGLTRGTTKEHFIRATLESLAYQTKDVLAAMEADSGIALKTLRVDGGAVKNNFLMQFQSDMLGVPVERPVINETTALGAAYLAGLAVGYWKDRKEIASQWQLERQFEPQMAKEKQEQLYAGWKKAVKAAMAFK.

An ADP-binding site is contributed by T12. 3 residues coordinate ATP: T12, T13, and S14. T12 lines the sn-glycerol 3-phosphate pocket. R16 provides a ligand contact to ADP. Residues R82, E83, and Y134 each contribute to the sn-glycerol 3-phosphate site. Positions 82, 83, and 134 each coordinate glycerol. Position 230 is a phosphohistidine; by HPr (H230). Sn-glycerol 3-phosphate is bound at residue D244. Glycerol-binding residues include D244 and Q245. ADP contacts are provided by T266 and G309. ATP-binding residues include T266, G309, Q313, and G410. ADP-binding residues include G410 and N414.

This sequence belongs to the FGGY kinase family. As to quaternary structure, homotetramer and homodimer (in equilibrium). Post-translationally, the phosphoenolpyruvate-dependent sugar phosphotransferase system (PTS), including enzyme I, and histidine-containing protein (HPr) are required for the phosphorylation, which leads to the activation of the enzyme.

The enzyme catalyses glycerol + ATP = sn-glycerol 3-phosphate + ADP + H(+). Its pathway is polyol metabolism; glycerol degradation via glycerol kinase pathway; sn-glycerol 3-phosphate from glycerol: step 1/1. Its activity is regulated as follows. Activated by phosphorylation and inhibited by fructose 1,6-bisphosphate (FBP). Functionally, key enzyme in the regulation of glycerol uptake and metabolism. Catalyzes the phosphorylation of glycerol to yield sn-glycerol 3-phosphate. The protein is Glycerol kinase of Geobacillus sp. (strain WCH70).